We begin with the raw amino-acid sequence, 2208 residues long: Glutamate synthase 1 [NADH], chloroplastic (2208 aa).

Residues 1–49 (MSAASSSSVLHLRTNQQLLSLRSLKNSTSVASQLAVTSGVSRRRSCTAR) constitute a chloroplast transit peptide. Residue Cys-117 is the Nucleophile of the active site. The Glutamine amidotransferase type-2 domain maps to 117–521 (CGVGFVAELS…PGMMLLVDFE (405 aa)). The interval 1040–1067 (GKSNTGEGGELPSRMEPLADGSRNPKRS) is disordered. 1211–1268 (LAETHQTLVANDLRGRTVLQTDGQLKTGRDVAVAALLGAEEFGFSTAPLITLGCIMMR) contributes to the FMN binding site. [3Fe-4S] cluster is bound by residues Cys-1264, Cys-1270, and Cys-1275. Residue 1995–2009 (GGGDTGTDCIGTSIR) coordinates NAD(+).

It belongs to the glutamate synthase family. In terms of assembly, monomer. [3Fe-4S] cluster serves as cofactor. The cofactor is FAD. FMN is required as a cofactor. As to expression, highly expressed in roots and at low levels in leaves.

The protein resides in the plastid. It is found in the chloroplast. It catalyses the reaction 2 L-glutamate + NAD(+) = L-glutamine + 2-oxoglutarate + NADH + H(+). Its pathway is amino-acid biosynthesis; L-glutamate biosynthesis via GLT pathway; L-glutamate from 2-oxoglutarate and L-glutamine (NAD(+) route): step 1/1. It participates in energy metabolism; nitrogen metabolism. In terms of biological role, involved in glutamate biosynthesis. Required for non-photorespiratory ammonium assimilation. Probably involved in primary ammonium assimilation in roots. This chain is Glutamate synthase 1 [NADH], chloroplastic (GLT1), found in Arabidopsis thaliana (Mouse-ear cress).